We begin with the raw amino-acid sequence, 504 residues long: Glycerol kinase (504 aa).

Thr-12 contributes to the ADP binding site. Positions 12, 13, and 14 each coordinate ATP. Sn-glycerol 3-phosphate is bound at residue Thr-12. Arg-16 contacts ADP. 4 residues coordinate sn-glycerol 3-phosphate: Arg-82, Glu-83, Tyr-134, and Asp-249. Arg-82, Glu-83, Tyr-134, Asp-249, and Gln-250 together coordinate glycerol. Positions 271 and 315 each coordinate ADP. Residues Thr-271, Gly-315, Gln-319, and Gly-416 each coordinate ATP. ADP is bound by residues Gly-416 and Asn-420.

This sequence belongs to the FGGY kinase family.

It carries out the reaction glycerol + ATP = sn-glycerol 3-phosphate + ADP + H(+). The protein operates within polyol metabolism; glycerol degradation via glycerol kinase pathway; sn-glycerol 3-phosphate from glycerol: step 1/1. With respect to regulation, inhibited by fructose 1,6-bisphosphate (FBP). Key enzyme in the regulation of glycerol uptake and metabolism. Catalyzes the phosphorylation of glycerol to yield sn-glycerol 3-phosphate. In Mycobacteroides abscessus (strain ATCC 19977 / DSM 44196 / CCUG 20993 / CIP 104536 / JCM 13569 / NCTC 13031 / TMC 1543 / L948) (Mycobacterium abscessus), this protein is Glycerol kinase.